We begin with the raw amino-acid sequence, 143 residues long: Large ribosomal subunit protein uL11 (143 aa).

This sequence belongs to the universal ribosomal protein uL11 family. In terms of assembly, part of the ribosomal stalk of the 50S ribosomal subunit. Interacts with L10 and the large rRNA to form the base of the stalk. L10 forms an elongated spine to which L12 dimers bind in a sequential fashion forming a multimeric L10(L12)X complex. Post-translationally, one or more lysine residues are methylated.

Forms part of the ribosomal stalk which helps the ribosome interact with GTP-bound translation factors. This is Large ribosomal subunit protein uL11 from Cellvibrio japonicus (strain Ueda107) (Pseudomonas fluorescens subsp. cellulosa).